Consider the following 522-residue polypeptide: Gypsy retrotransposon integrase-like protein 1 (522 aa).

One can recognise an Integrase catalytic domain in the interval 135 to 292 (KVENPWSLVT…TPYFQMFSRN (158 aa)).

The polypeptide is Gypsy retrotransposon integrase-like protein 1 (GIN1) (Macaca fascicularis (Crab-eating macaque)).